The following is a 341-amino-acid chain: MNEGYIIAGLLLLTAGMIDFLWTTLWLESGAGPITRCLSAWLWKGCRKISGDHAKVLSMAGPLLLCLTLVIWISLFWSGWVLIYSSDPHSLMETQSKEPASWSDRIYFSGYVMFTLGNGDLAPNGGLWKLVTIIETAQGLLTITFSVTYLISVLSAVNQKRSFAQSVLSLGHDGTEIVHNAWNGKDFHDIDFLLVAASSELGKLTAQHNAFPILHFYHSTQHQESSIIAVAVLDEALTIFKYGIPEQYQPNQLHIKEARSSIKNYLDTVHTAYIHPAEQAPPEPDISKLQQSGIPALSKQTFQIAVNSIKERRQLLLGIIQAGARKWPVQEQAIGNAYSPK.

3 helical membrane passes run 6 to 26 (IIAG…TTLW), 63 to 83 (LLLC…WVLI), and 137 to 157 (AQGL…LSAV).

The protein localises to the cell membrane. This is an uncharacterized protein from Bacillus subtilis (strain 168).